The primary structure comprises 248 residues: 1-(5-phosphoribosyl)-5-[(5-phosphoribosylamino)methylideneamino] imidazole-4-carboxamide isomerase (248 aa).

The Proton acceptor role is filled by Asp-8. Asp-130 acts as the Proton donor in catalysis.

Belongs to the HisA/HisF family.

The protein resides in the cytoplasm. The enzyme catalyses 1-(5-phospho-beta-D-ribosyl)-5-[(5-phospho-beta-D-ribosylamino)methylideneamino]imidazole-4-carboxamide = 5-[(5-phospho-1-deoxy-D-ribulos-1-ylimino)methylamino]-1-(5-phospho-beta-D-ribosyl)imidazole-4-carboxamide. It participates in amino-acid biosynthesis; L-histidine biosynthesis; L-histidine from 5-phospho-alpha-D-ribose 1-diphosphate: step 4/9. This Alkalilimnicola ehrlichii (strain ATCC BAA-1101 / DSM 17681 / MLHE-1) protein is 1-(5-phosphoribosyl)-5-[(5-phosphoribosylamino)methylideneamino] imidazole-4-carboxamide isomerase.